We begin with the raw amino-acid sequence, 148 residues long: Nucleoside diphosphate kinase (148 aa).

ATP-binding residues include K9, F57, R85, T91, R102, and N112. At T91 the chain carries Phosphothreonine. The Pros-phosphohistidine intermediate role is filled by H115. Phosphoserine is present on S122.

The protein belongs to the NDK family. Homotetramer. Requires Mg(2+) as cofactor.

Its subcellular location is the cytoplasm. It catalyses the reaction a 2'-deoxyribonucleoside 5'-diphosphate + ATP = a 2'-deoxyribonucleoside 5'-triphosphate + ADP. It carries out the reaction a ribonucleoside 5'-diphosphate + ATP = a ribonucleoside 5'-triphosphate + ADP. Functionally, major role in the synthesis of nucleoside triphosphates other than ATP. The ATP gamma phosphate is transferred to the NDP beta phosphate via a ping-pong mechanism, using a phosphorylated active-site intermediate. The polypeptide is Nucleoside diphosphate kinase (Bacillus cereus (strain ATCC 14579 / DSM 31 / CCUG 7414 / JCM 2152 / NBRC 15305 / NCIMB 9373 / NCTC 2599 / NRRL B-3711)).